Here is a 43-residue protein sequence, read N- to C-terminus: Potassium channel toxin gamma-KTx 4.3 (43 aa).

4 disulfides stabilise this stretch: Cys-5–Cys-23, Cys-11–Cys-34, Cys-20–Cys-39, and Cys-24–Cys-41.

This sequence belongs to the ergtoxin family. Gamma-KTx 4 subfamily. As to expression, expressed by the venom gland.

Its subcellular location is the secreted. Functionally, reversibly blocks Kv11/ERG potassium channels. The sequence is that of Potassium channel toxin gamma-KTx 4.3 from Centruroides exilicauda (Bark scorpion).